A 177-amino-acid polypeptide reads, in one-letter code: Cytidylate kinase (177 aa).

8–16 (GPPGGGKTT) provides a ligand contact to ATP.

This sequence belongs to the cytidylate kinase family. Type 2 subfamily.

It localises to the cytoplasm. The catalysed reaction is CMP + ATP = CDP + ADP. The enzyme catalyses dCMP + ATP = dCDP + ADP. This chain is Cytidylate kinase, found in Staphylothermus marinus (strain ATCC 43588 / DSM 3639 / JCM 9404 / F1).